A 268-amino-acid chain; its full sequence is Hydroxyethylthiazole kinase (268 aa).

Met-45 is a substrate binding site. 2 residues coordinate ATP: Arg-121 and Thr-167. Position 194 (Gly-194) interacts with substrate.

The protein belongs to the Thz kinase family. Mg(2+) is required as a cofactor.

The enzyme catalyses 5-(2-hydroxyethyl)-4-methylthiazole + ATP = 4-methyl-5-(2-phosphooxyethyl)-thiazole + ADP + H(+). The protein operates within cofactor biosynthesis; thiamine diphosphate biosynthesis; 4-methyl-5-(2-phosphoethyl)-thiazole from 5-(2-hydroxyethyl)-4-methylthiazole: step 1/1. Its function is as follows. Catalyzes the phosphorylation of the hydroxyl group of 4-methyl-5-beta-hydroxyethylthiazole (THZ). The polypeptide is Hydroxyethylthiazole kinase (Bacillus thuringiensis subsp. konkukian (strain 97-27)).